The primary structure comprises 254 residues: Cdc42 effector protein 3 (254 aa).

Residues 31–45 (ISPPLGDFRHTIHIG) form the CRIB domain. Y63 carries the phosphotyrosine modification. A phosphoserine mark is found at S89, S108, and S144. The interval 165–205 (VHQGDTSWGSSGSGSQSSQGRDSHSSSLSEQSSDWPADDMF) is disordered. The span at 171–197 (SWGSSGSGSQSSQGRDSHSSSLSEQSS) shows a compositional bias: low complexity.

This sequence belongs to the BORG/CEP family. As to quaternary structure, interacts with RHOQ and CDC42, in a GTP-dependent manner, and with SEPT7.

It localises to the endomembrane system. Its subcellular location is the cytoplasm. It is found in the cytoskeleton. Probably involved in the organization of the actin cytoskeleton. May act downstream of CDC42 to induce actin filament assembly leading to cell shape changes. Induces pseudopodia formation in fibroblasts. The chain is Cdc42 effector protein 3 (Cdc42ep3) from Mus musculus (Mouse).